A 246-amino-acid chain; its full sequence is Probable transcriptional regulatory protein CLK_2466 (246 aa).

It belongs to the TACO1 family.

Its subcellular location is the cytoplasm. The sequence is that of Probable transcriptional regulatory protein CLK_2466 from Clostridium botulinum (strain Loch Maree / Type A3).